A 430-amino-acid polypeptide reads, in one-letter code: Pre-B-cell leukemia transcription factor 2 (430 aa).

Residues 1 to 52 (MDERLLGPPPPGGGRGGLGLVSGEPGGPGEPPGGGDPGGGSGGVPGGRGKQD) form a disordered region. Positions 13–48 (GGRGGLGLVSGEPGGPGEPPGGGDPGGGSGGVPGGR) are enriched in gly residues. Residues 48-243 (RGKQDIGDIL…VMILRSRFLD (196 aa)) form the PBC domain. The interval 55-134 (DILQQIMTIT…EGVAGPEKGG (80 aa)) is PBC-A. Residues S136, S151, and S159 each carry the phosphoserine modification. The tract at residues 137-243 (AAAAAAAAAS…VMILRSRFLD (107 aa)) is PBC-B. A DNA-binding region (homeobox; TALE-type) is located at residues 244–306 (ARRKRRNFSK…NKRIRYKKNI (63 aa)). 2 disordered regions span residues 326 to 347 (QGGH…GGSF) and 378 to 430 (SMGP…DTSN). S330 bears the Phosphoserine mark. Residues 380–392 (GPGGYGDNLGGGQ) are compositionally biased toward gly residues. Phosphoserine is present on S395. The segment covering 403–418 (GSWQEAVTPSSVTSPT) has biased composition (polar residues).

The protein belongs to the TALE/PBX homeobox family. As to quaternary structure, forms heterodimers with MEIS1 and heterotrimers with MEIS1 and HOXA9. Interacts with PBXIP1. Ubiquitously expressed.

It is found in the nucleus. Transcriptional activator that binds the sequence 5'-ATCAATCAA-3'. Activates transcription of PF4 in complex with MEIS1. This chain is Pre-B-cell leukemia transcription factor 2 (PBX2), found in Homo sapiens (Human).